The sequence spans 273 residues: Torsin-1A (273 aa).

The tract at residues 45–205 is interaction with SNAPIN; sequence KPKKPLTLSL…VSVFNNKNSG (161 aa). Residue 56-63 participates in ATP binding; that stretch reads GWTGTGKN. Residues N97 and N112 are each glycosylated (N-linked (GlcNAc...) asparagine).

Belongs to the ClpA/ClpB family. Torsin subfamily. In terms of assembly, homohexamer. Interacts with TOR1B; the interaction may be specific of neural tissues. Interacts (ATP-bound) with TOR1AIP1 and TOR1AIP2; the interactions induce ATPase activity. Interacts with KLHL14; preferentially when ATP-free. Interacts with KLC1 (via TPR repeats); the interaction associates TOR1A with the kinesin oligomeric complex. Interacts with COPS4; the interaction associates TOR1A with the CSN complex. Interacts with SNAPIN; the interaction is direct and associates SNAPIN with the CSN complex. Interacts with STON2. Interacts (ATP-bound) with SYNE3 (via KASH domain); the interaction is required for SYNE3 nuclear envelope localization. Interacts with VIM; the interaction associates TOR1A with the cytoskeleton. Interacts with PLEC. Interacts (ATP-bound) with SLC6A3; regulates SLC6A3 transport to the plasma membrane. Post-translationally, N-glycosylated.

It localises to the endoplasmic reticulum lumen. Its subcellular location is the nucleus membrane. The protein localises to the cell projection. It is found in the growth cone. The protein resides in the cytoplasmic vesicle membrane. It localises to the synapse. Its subcellular location is the synaptosome. The protein localises to the cytoplasm. It is found in the cytoskeleton. It carries out the reaction ATP + H2O = ADP + phosphate + H(+). In terms of biological role, protein with chaperone functions important for the control of protein folding, processing, stability and localization as well as for the reduction of misfolded protein aggregates. Involved in the regulation of synaptic vesicle recycling, controls STON2 protein stability in collaboration with the COP9 signalosome complex (CSN). In the nucleus, may link the cytoskeleton with the nuclear envelope, this mechanism seems to be crucial for the control of nuclear polarity, cell movement and, specifically in neurons, nuclear envelope integrity. Participates in the cellular trafficking and may regulate the subcellular location of multipass membrane proteins such as the dopamine transporter SLC6A3, leading to the modulation of dopamine neurotransmission. In the endoplasmic reticulum, plays a role in the quality control of protein folding by increasing clearance of misfolded proteins such as SGCE variants or holding them in an intermediate state for proper refolding. May have a redundant function with TOR1B in non-neural tissues. The polypeptide is Torsin-1A (TOR1A) (Cricetus cricetus (Black-bellied hamster)).